We begin with the raw amino-acid sequence, 490 residues long: Ribulose bisphosphate carboxylase large chain (490 aa).

Residues Asn127 and Thr177 each contribute to the substrate site. The active-site Proton acceptor is the Lys179. A substrate-binding site is contributed by Lys181. Residues Lys205, Asp207, and Glu208 each coordinate Mg(2+). Lys205 is subject to N6-carboxylysine. The Proton acceptor role is filled by His297. Substrate-binding residues include Arg298, His330, and Ser382.

The protein belongs to the RuBisCO large chain family. Type I subfamily. As to quaternary structure, heterohexadecamer of 8 large chains and 8 small chains. The cofactor is Mg(2+).

It is found in the plastid. The protein resides in the chloroplast. The enzyme catalyses 2 (2R)-3-phosphoglycerate + 2 H(+) = D-ribulose 1,5-bisphosphate + CO2 + H2O. It catalyses the reaction D-ribulose 1,5-bisphosphate + O2 = 2-phosphoglycolate + (2R)-3-phosphoglycerate + 2 H(+). In terms of biological role, ruBisCO catalyzes two reactions: the carboxylation of D-ribulose 1,5-bisphosphate, the primary event in carbon dioxide fixation, as well as the oxidative fragmentation of the pentose substrate in the photorespiration process. Both reactions occur simultaneously and in competition at the same active site. This is Ribulose bisphosphate carboxylase large chain from Detonula confervacea (Marine diatom).